Reading from the N-terminus, the 233-residue chain is Small ribosomal subunit protein uS3 (233 aa).

In terms of domain architecture, KH type-2 spans 39-108; it reads IRTALFKLLK…KLIVNVRVIE (70 aa).

The protein belongs to the universal ribosomal protein uS3 family. In terms of assembly, part of the 30S ribosomal subunit. Forms a tight complex with proteins S10 and S14.

Binds the lower part of the 30S subunit head. Binds mRNA in the 70S ribosome, positioning it for translation. This Mycoplasma mycoides subsp. mycoides SC (strain CCUG 32753 / NCTC 10114 / PG1) protein is Small ribosomal subunit protein uS3.